We begin with the raw amino-acid sequence, 629 residues long: Chaperone protein HtpG (629 aa).

Positions 1–335 (MSEVETSVEK…TADLPLNVSR (335 aa)) are a; substrate-binding. The tract at residues 336–551 (EMIQESPLLA…EQGPDRQLQK (216 aa)) is b. The segment at 552–629 (MLQDAGRIEG…SRVFGRALKE (78 aa)) is c.

The protein belongs to the heat shock protein 90 family. As to quaternary structure, homodimer.

The protein localises to the cytoplasm. Molecular chaperone. Has ATPase activity. This chain is Chaperone protein HtpG, found in Rhizobium meliloti (strain 1021) (Ensifer meliloti).